A 671-amino-acid chain; its full sequence is Probable potassium transport system protein Kup 2 (671 aa).

Helical transmembrane passes span 12-32 (FAGLLIAIGIVYGDIGTSPLY), 56-76 (ISLILWTVTLLTTVKYVMIAL), 99-119 (WLVIPALIGGAALLADGTLTP), 139-159 (IPVPSQEVVIMITIIILVILF), 172-192 (AFGPIMLIWFTFLGVVGIANL), 218-238 (VGILILGSVFLATTGAEALYS), 251-271 (SWPYIFVCLSLNYLGQGAWIL), 296-316 (LFAIALATIAAIIASQALITG), 345-365 (IYIPLINKMICVVTVAIVFLF), 374-394 (AYGLAITVTMLMTTILLFEYL), 400-420 (PLYLRVIFLIAFAFIEGMFLI), and 429-449 (GGYVTVLIAGFILVIMYVWFY).

Belongs to the HAK/KUP transporter (TC 2.A.72) family.

It localises to the cell membrane. It catalyses the reaction K(+)(in) + H(+)(in) = K(+)(out) + H(+)(out). Its function is as follows. Transport of potassium into the cell. Likely operates as a K(+):H(+) symporter. This Lactobacillus acidophilus (strain ATCC 700396 / NCK56 / N2 / NCFM) protein is Probable potassium transport system protein Kup 2.